The sequence spans 201 residues: L(+)-tartrate dehydratase subunit beta (201 aa).

The active site involves His37.

The protein belongs to the class-I fumarase family. As to quaternary structure, heterotetramer of two alpha and two beta subunits.

It catalyses the reaction (2R,3R)-tartrate = oxaloacetate + H2O. This is L(+)-tartrate dehydratase subunit beta (ttdB) from Escherichia coli O6:K15:H31 (strain 536 / UPEC).